The sequence spans 202 residues: Thymidine kinase (202 aa).

Residues 16–23 and 99–102 contribute to the ATP site; these read GPMFSGKS and DEVQ. The Proton acceptor role is filled by Glu100. Cys156, Cys159, Cys194, and His197 together coordinate Zn(2+).

It belongs to the thymidine kinase family. In terms of assembly, homotetramer.

The protein localises to the cytoplasm. The catalysed reaction is thymidine + ATP = dTMP + ADP + H(+). The chain is Thymidine kinase from Deinococcus deserti (strain DSM 17065 / CIP 109153 / LMG 22923 / VCD115).